A 293-amino-acid chain; its full sequence is NAD kinase (293 aa).

The active-site Proton acceptor is the aspartate 74. Residues 74–75, 148–149, histidine 159, arginine 176, aspartate 178, threonine 186, 189–194, and glutamine 248 each bind NAD(+); these read DG, NE, and TAYSLS.

This sequence belongs to the NAD kinase family. As to quaternary structure, homodimer. It depends on a divalent metal cation as a cofactor.

Its subcellular location is the cytoplasm. It catalyses the reaction NAD(+) + ATP = ADP + NADP(+) + H(+). Involved in the regulation of the intracellular balance of NAD and NADP, and is a key enzyme in the biosynthesis of NADP. Catalyzes specifically the phosphorylation on 2'-hydroxyl of the adenosine moiety of NAD to yield NADP. The sequence is that of NAD kinase from Yersinia pestis.